The sequence spans 86 residues: Large ribosomal subunit protein eL43 (86 aa).

The C4-type zinc-finger motif lies at 38–60 (CPFCGHKGKVYRLSTGVWACKKC).

It belongs to the eukaryotic ribosomal protein eL43 family. The cofactor is Zn(2+).

This chain is Large ribosomal subunit protein eL43, found in Desulfurococcus amylolyticus (strain DSM 18924 / JCM 16383 / VKM B-2413 / 1221n) (Desulfurococcus kamchatkensis).